The chain runs to 446 residues: Chromosomal replication initiator protein DnaA (446 aa).

The tract at residues 1 to 72 (MENILDLWNQ…ADTIYELTGE (72 aa)) is domain I, interacts with DnaA modulators. Positions 72 to 109 (EELSVKFVIPQNQDEENFLPKPQVKKAAKEEPSDFPQS) are domain II. The segment at 110 to 326 (MLNPKYTFDT…GALIRVVAYS (217 aa)) is domain III, AAA+ region. The ATP site is built by Gly154, Gly156, Lys157, and Thr158. The domain IV, binds dsDNA stretch occupies residues 327-446 (SLINKDINAD…QVKEIKELLK (120 aa)).

It belongs to the DnaA family. As to quaternary structure, oligomerizes as a right-handed, spiral filament on DNA at oriC.

It localises to the cytoplasm. Its function is as follows. Plays an essential role in the initiation and regulation of chromosomal replication. ATP-DnaA binds to the origin of replication (oriC) to initiate formation of the DNA replication initiation complex once per cell cycle. Binds the DnaA box (a 9 base pair repeat at the origin) and separates the double-stranded (ds)DNA. Forms a right-handed helical filament on oriC DNA; dsDNA binds to the exterior of the filament while single-stranded (ss)DNA is stabiized in the filament's interior. The ATP-DnaA-oriC complex binds and stabilizes one strand of the AT-rich DNA unwinding element (DUE), permitting loading of DNA polymerase. After initiation quickly degrades to an ADP-DnaA complex that is not apt for DNA replication. Binds acidic phospholipids. The sequence is that of Chromosomal replication initiator protein DnaA from Bacillus velezensis (strain DSM 23117 / BGSC 10A6 / LMG 26770 / FZB42) (Bacillus amyloliquefaciens subsp. plantarum).